Here is a 345-residue protein sequence, read N- to C-terminus: Beta-hexosaminidase (345 aa).

Substrate is bound by residues D60, R68, R132, and 162 to 163; that span reads KH. The Proton donor/acceptor role is filled by H175. Residue D247 is the Nucleophile of the active site.

The protein belongs to the glycosyl hydrolase 3 family. NagZ subfamily.

It localises to the cytoplasm. The catalysed reaction is Hydrolysis of terminal non-reducing N-acetyl-D-hexosamine residues in N-acetyl-beta-D-hexosaminides.. Its pathway is cell wall biogenesis; peptidoglycan recycling. Functionally, plays a role in peptidoglycan recycling by cleaving the terminal beta-1,4-linked N-acetylglucosamine (GlcNAc) from peptide-linked peptidoglycan fragments, giving rise to free GlcNAc, anhydro-N-acetylmuramic acid and anhydro-N-acetylmuramic acid-linked peptides. The protein is Beta-hexosaminidase of Actinobacillus pleuropneumoniae serotype 3 (strain JL03).